Reading from the N-terminus, the 591-residue chain is Developmental and secondary metabolism regulator VEA1 (591 aa).

Residues 1–22 (MATKASSILHPPNETEHTMSRI) are disordered. The segment covering 13 to 22 (NETEHTMSRI) has biased composition (basic and acidic residues). The Velvet domain occupies 26 to 235 (GKKLTYNLKV…AEQGCRVRIR (210 aa)). The short motif at 40-45 (ERARAC) is the Nuclear localization signal element. A disordered region spans residues 238–547 (VRMRRREPKP…TSGGSDDEIM (310 aa)). The span at 245 to 260 (PKPNKDYGAYDDRRIT) shows a compositional bias: basic and acidic residues. Polar residues predominate over residues 306-321 (HQQPSPNLAATPQSHL). Residues 330 to 347 (YHAPPPPPTAHPAPPPAY) are compositionally biased toward pro residues. The segment covering 386–395 (YDQSKSSLPM) has biased composition (polar residues). Residues 422-433 (PSQLHPTQQYQQ) are compositionally biased toward low complexity. The span at 434–448 (PTPPPPPPAAIAPHP) shows a compositional bias: pro residues. The PEST stretch occupies residues 452–493 (RTPTKPSPSTFFPPTPSRLSVEVDSSNEADDAILNAIRTRRG). Over residues 494–516 (YILDEKSGATKRSRDSSDHDLKP) the composition is skewed to basic and acidic residues.

It belongs to the velvet family. VeA subfamily. As to quaternary structure, component of the heterotrimeric velvet complex composed of LAE1, VEA1 and VEL2; VEA1 acting as a bridging protein between LAE1 and VEL2.

Its subcellular location is the nucleus. The protein resides in the cytoplasm. Functionally, component of the velvet transcription factor complex that controls sexual/asexual developmental ratio in response to light, promoting sexual development in the darkness while stimulating asexual sporulation under illumination. The velvet complex hat acts as a global regulator for secondary metabolite gene expression. Regulates cleistothecial formation and hyphal growth. Acts as a positive regulator of virulence. The sequence is that of Developmental and secondary metabolism regulator VEA1 from Ajellomyces capsulatus (Darling's disease fungus).